Consider the following 489-residue polypeptide: Coiled-coil domain-containing protein 77 (489 aa).

Position 38 is a phosphoserine (Ser-38). Coiled-coil stretches lie at residues 57–120 (SQEL…QVCL) and 212–487 (ERHQ…NALR).

In Mus musculus (Mouse), this protein is Coiled-coil domain-containing protein 77 (Ccdc77).